We begin with the raw amino-acid sequence, 162 residues long: Shikimate kinase (162 aa).

Position 11 to 16 (11 to 16) interacts with ATP; it reads GSGKSS. Residue Ser-15 participates in Mg(2+) binding. 3 residues coordinate substrate: Asp-33, Arg-57, and Gly-80. Arg-116 contributes to the ATP binding site. Arg-132 serves as a coordination point for substrate.

Belongs to the shikimate kinase family. Monomer. Mg(2+) is required as a cofactor.

Its subcellular location is the cytoplasm. The enzyme catalyses shikimate + ATP = 3-phosphoshikimate + ADP + H(+). It participates in metabolic intermediate biosynthesis; chorismate biosynthesis; chorismate from D-erythrose 4-phosphate and phosphoenolpyruvate: step 5/7. Catalyzes the specific phosphorylation of the 3-hydroxyl group of shikimic acid using ATP as a cosubstrate. This is Shikimate kinase from Helicobacter pylori (strain G27).